Consider the following 204-residue polypeptide: Guanylate kinase (204 aa).

The Guanylate kinase-like domain occupies glycine 4–glutamine 182. Alanine 11–threonine 18 lines the ATP pocket.

The protein belongs to the guanylate kinase family.

Its subcellular location is the cytoplasm. It carries out the reaction GMP + ATP = GDP + ADP. Its function is as follows. Essential for recycling GMP and indirectly, cGMP. The chain is Guanylate kinase from Methylococcus capsulatus (strain ATCC 33009 / NCIMB 11132 / Bath).